The primary structure comprises 225 residues: Protein-L-isoaspartate O-methyltransferase (225 aa).

Ser75 is an active-site residue.

It belongs to the methyltransferase superfamily. L-isoaspartyl/D-aspartyl protein methyltransferase family.

Its subcellular location is the cytoplasm. It catalyses the reaction [protein]-L-isoaspartate + S-adenosyl-L-methionine = [protein]-L-isoaspartate alpha-methyl ester + S-adenosyl-L-homocysteine. Its function is as follows. Catalyzes the methyl esterification of L-isoaspartyl residues in peptides and proteins that result from spontaneous decomposition of normal L-aspartyl and L-asparaginyl residues. It plays a role in the repair and/or degradation of damaged proteins. This chain is Protein-L-isoaspartate O-methyltransferase, found in Stenotrophomonas maltophilia (strain R551-3).